The primary structure comprises 264 residues: Proliferating cell nuclear antigen (264 aa).

The DNA-binding element occupies 61–80; the sequence is RCDRNISMGMNLGNMAKMLK.

The protein belongs to the PCNA family.

Its subcellular location is the nucleus. This protein is an auxiliary protein of DNA polymerase delta and is involved in the control of eukaryotic DNA replication by increasing the polymerase's processibility during elongation of the leading strand. The polypeptide is Proliferating cell nuclear antigen (Daucus carota (Wild carrot)).